A 307-amino-acid polypeptide reads, in one-letter code: HTH-type transcriptional regulator DmlR (307 aa).

In terms of domain architecture, HTH lysR-type spans 5–62; the sequence is PLLNDLRVFMLVARRAGFAAVAEELGVSPAFVSKRIALLEQTLNVVLLHRTTRRVTIT. The H-T-H motif DNA-binding region spans 22–41; sequence FAAVAEELGVSPAFVSKRIA.

This sequence belongs to the LysR transcriptional regulatory family.

In terms of biological role, transcriptional regulator required for the aerobic growth on D-malate as the sole carbon source. Induces the expression of dmlA in response to D-malate or L- or meso-tartrate. Negatively regulates its own expression. This is HTH-type transcriptional regulator DmlR (dmlR) from Escherichia coli (strain K12).